The sequence spans 211 residues: tRNA (guanine-N(7)-)-methyltransferase (211 aa).

S-adenosyl-L-methionine contacts are provided by Glu44, Asp69, Asp96, and Asp118. Residue Asp118 is part of the active site. Lys122 provides a ligand contact to substrate. The interval 124-129 (RHEKRR) is interaction with RNA. Substrate-binding positions include Asp154 and 191–194 (TEYE).

This sequence belongs to the class I-like SAM-binding methyltransferase superfamily. TrmB family.

It catalyses the reaction guanosine(46) in tRNA + S-adenosyl-L-methionine = N(7)-methylguanosine(46) in tRNA + S-adenosyl-L-homocysteine. It functions in the pathway tRNA modification; N(7)-methylguanine-tRNA biosynthesis. In terms of biological role, catalyzes the formation of N(7)-methylguanine at position 46 (m7G46) in tRNA. This is tRNA (guanine-N(7)-)-methyltransferase from Streptococcus pneumoniae (strain JJA).